A 288-amino-acid polypeptide reads, in one-letter code: ATP phosphoribosyltransferase (288 aa).

This sequence belongs to the ATP phosphoribosyltransferase family. Long subfamily. Requires Mg(2+) as cofactor.

The protein resides in the cytoplasm. It catalyses the reaction 1-(5-phospho-beta-D-ribosyl)-ATP + diphosphate = 5-phospho-alpha-D-ribose 1-diphosphate + ATP. It participates in amino-acid biosynthesis; L-histidine biosynthesis; L-histidine from 5-phospho-alpha-D-ribose 1-diphosphate: step 1/9. Its activity is regulated as follows. Feedback inhibited by histidine. Its function is as follows. Catalyzes the condensation of ATP and 5-phosphoribose 1-diphosphate to form N'-(5'-phosphoribosyl)-ATP (PR-ATP). Has a crucial role in the pathway because the rate of histidine biosynthesis seems to be controlled primarily by regulation of HisG enzymatic activity. The polypeptide is ATP phosphoribosyltransferase (Methanococcus maripaludis (strain C5 / ATCC BAA-1333)).